Here is a 160-residue protein sequence, read N- to C-terminus: Competence protein ComGD (160 aa).

A helical membrane pass occupies residues 30 to 50 (AFTMLESLLVLGLVSILALGL).

As to quaternary structure, the transformation pili are flexible filaments, consisting mainly of the major pilin ComGC and smaller amounts of the minor pilins, including at least ComGD, ComGF and ComGG, and perhaps ComGE. Interacts with ComGE. Interacts with ComGF. Interacts with ComGG.

The protein resides in the cell membrane. The protein localises to the cell surface. It is found in the fimbrium. Required for formation of the type IV-like pilus (T4P) that plays a role in transformation. Transformation pili are dynamically extended and retracted, perhaps thereby promoting DNA uptake and transformation. Involved in transformation. Required for DNA binding. The chain is Competence protein ComGD from Streptococcus pneumoniae (strain ATCC BAA-255 / R6).